Consider the following 416-residue polypeptide: Histidine--tRNA ligase (416 aa).

This sequence belongs to the class-II aminoacyl-tRNA synthetase family.

It is found in the cytoplasm. The enzyme catalyses tRNA(His) + L-histidine + ATP = L-histidyl-tRNA(His) + AMP + diphosphate + H(+). This is Histidine--tRNA ligase (hisS) from Methanocaldococcus jannaschii (strain ATCC 43067 / DSM 2661 / JAL-1 / JCM 10045 / NBRC 100440) (Methanococcus jannaschii).